The chain runs to 469 residues: MSAKAAPQDYFVKDISLAEYGRKEIAIAETEMPGLMAAREEFGPSQPLKGARICGSLHMTIQTAVLIQTLEALGAQVRWVSCNIYSTQDHAAAAIADAGTAVFAYKGETLEEYWDYTDRMFQWPDGEGPNLILDDGGDATMYLILGEKAESDPSFLEKPTSEEEKYFFAQIKKRLTASPGWFKKTKAGVRGVSEETTTGVNRLYQLEKRGELPFPAINVNDSVTKSKFDNKYGCKESLVDAIRRGTDVMMAGKKAFVAGYGDVGKGSAASLAGSGARVGVSEVDPICALQAAMDGFEVLTMDEAAPKFDIFVTATGNKDILTVDHMRAMKDMAIVCNIGHFDNEIQVEGLRNFQWTNIKPQVDMITFPDGKRIILLSEGRLVNLGNATGHPSFVMSASFTNQTLAQIELHLRGNEYDNKVYTLPKHLDEKVARLHLDKLGVQLTKLSGEQAAYIGVEQTGPFKPEHYRY.

T60, D135, and E195 together coordinate substrate. 196-198 (TTT) lines the NAD(+) pocket. Positions 225 and 229 each coordinate substrate. NAD(+) contacts are provided by residues N230, 259–264 (GYGDVG), E282, N317, 338–340 (IGH), and N383.

This sequence belongs to the adenosylhomocysteinase family. It depends on NAD(+) as a cofactor.

It localises to the cytoplasm. The enzyme catalyses S-adenosyl-L-homocysteine + H2O = L-homocysteine + adenosine. It functions in the pathway amino-acid biosynthesis; L-homocysteine biosynthesis; L-homocysteine from S-adenosyl-L-homocysteine: step 1/1. Its function is as follows. May play a key role in the regulation of the intracellular concentration of adenosylhomocysteine. The polypeptide is Adenosylhomocysteinase (Hyphomonas neptunium (strain ATCC 15444)).